A 686-amino-acid polypeptide reads, in one-letter code: Homoaconitase, mitochondrial (686 aa).

The N-terminal 17 residues, 1–17, are a transit peptide targeting the mitochondrion; sequence MRVVRCVRRFSASRAVS. [4Fe-4S] cluster contacts are provided by Cys337, Cys401, and Cys404.

It belongs to the aconitase/IPM isomerase family. It depends on [4Fe-4S] cluster as a cofactor.

The protein resides in the mitochondrion. The catalysed reaction is (2R,3S)-homoisocitrate = cis-homoaconitate + H2O. It functions in the pathway amino-acid biosynthesis; L-lysine biosynthesis via AAA pathway; L-alpha-aminoadipate from 2-oxoglutarate: step 3/5. In terms of biological role, catalyzes the reversible hydration of cis-homoaconitate to (2R,3S)-homoisocitrate, a step in the alpha-aminoadipate pathway for lysine biosynthesis. The chain is Homoaconitase, mitochondrial (LYS4) from Eremothecium gossypii (strain ATCC 10895 / CBS 109.51 / FGSC 9923 / NRRL Y-1056) (Yeast).